An 88-amino-acid chain; its full sequence is MAHKKGTGSTRNGRDSNSKRLGVKAYGGETVTAGSILIRQRGTSVLPGVNVGQGKDDTLFALTDGVVTFESIRRSLRNRKRISVVASS.

A disordered region spans residues 1–24; that stretch reads MAHKKGTGSTRNGRDSNSKRLGVK.

Belongs to the bacterial ribosomal protein bL27 family.

This Prochlorococcus marinus (strain MIT 9303) protein is Large ribosomal subunit protein bL27.